A 245-amino-acid polypeptide reads, in one-letter code: LSIRVLLHKLLILLQVTLSVVVGKTMMILFPDTTKRYILKLGEKSRMNQNPKFSYENWGPTFFSFQYLLFVLKVKWRRLEDEAHEGRPAPNTPVVALNGEMQHLFSFMRDNRPLILNFGSCTUPSFMLKFDEFNKLVKDFSSIADFLIIYIEEAHAVDGWAFRNNVVIKNHRSLEDRKTAAQFLQQKNPLCPVVLDTMENLSSSKYAALPERLYILQAGNVIYKGGVGPWNYHPQEIRAVLEKLK.

The Extracellular portion of the chain corresponds to Leu-1 to Lys-9. The chain crosses the membrane as a helical; Signal-anchor for type III membrane protein span at residues Leu-10 to Phe-30. The Cytoplasmic segment spans residues Pro-31–Lys-245. Sec-123 is an active-site residue. Sec-123 is a non-standard amino acid (selenocysteine).

This sequence belongs to the iodothyronine deiodinase family. As to quaternary structure, predominantly monomer. Can form homodimers but homodimerization is not essential for enzyme activity.

The protein localises to the cell membrane. It localises to the endoplasmic reticulum membrane. Its subcellular location is the basolateral cell membrane. It carries out the reaction 3,3',5-triiodo-L-thyronine + iodide + A + H(+) = L-thyroxine + AH2. It catalyses the reaction 3,3',5'-triiodo-L-thyronine + iodide + A + H(+) = L-thyroxine + AH2. The catalysed reaction is 3,3'-diiodo-L-thyronine + iodide + A + H(+) = 3,3',5'-triiodo-L-thyronine + AH2. The enzyme catalyses 3,3'-diiodo-L-thyronine + iodide + A + H(+) = 3,3',5-triiodo-L-thyronine + AH2. It carries out the reaction 3'-iodo-L-thyronine + iodide + A + H(+) = 3',5'-diiodo-L-thyronine + AH2. It catalyses the reaction 3-iodo-L-thyronine + iodide + A + H(+) = 3,5-diiodo-L-thyronine + AH2. The catalysed reaction is 3-iodo-L-thyronine + iodide + A + H(+) = 3,3'-diiodo-L-thyronine + AH2. The enzyme catalyses 3,3'-diiodothyronamine + iodide + A + H(+) = 3,3',5'-triiodothyronamine + AH2. It carries out the reaction 3'-iodothyronamine + iodide + A + H(+) = 3',5'-diiodothyronamine + AH2. It catalyses the reaction 3-iodothyronamine + iodide + A + H(+) = 3,3'-diiodothyronamine + AH2. The catalysed reaction is 3,3'-diiodothyronamine + iodide + A + H(+) = 3,3',5-triiodothyronamine + AH2. The enzyme catalyses 3-iodothyronamine + iodide + A + H(+) = 3,5-diiodothyronamine + AH2. It carries out the reaction 3,3'-diiodo-L-thyronine sulfate + iodide + A + H(+) = 3,3',5'-triiodo-L-thyronine sulfate + AH2. It catalyses the reaction 3,3',5'-triiodo-L-thyronine sulfate + iodide + A + H(+) = L-thyroxine sulfate + AH2. The catalysed reaction is 3,3'-diiodo-L-thyronine sulfate + iodide + A + H(+) = 3,3',5-triiodo-L-thyronine sulfate + AH2. Plays a crucial role in the metabolism of thyroid hormones (TH) and has specific roles in TH activation and inactivation by deiodination. Catalyzes the deiodiantion of L-thyroxine (T4) to 3,5,3'-triiodothyronine (T3) and 3,3',5'-triiodothyronine (rT3) to 3,3'-diiodothyronine (3,3'-T2) via outer-ring deiodination (ORD). Catalyzes the deiodiantion of T4 to rT3, T3 to 3,3'-T2, 3,5-diiodothyronine (3,5-T2) to 3-monoiodothyronine (3-T1) and 3,3'-T2 to 3-T1 via inner-ring deiodination (IRD). Catalyzes the deiodiantion of 3',5'-diiodothyronine (3',5'-T2) to 3'-monoiodothyronine (3'-T1) via ORD. Catalyzes the phenolic ring deiodinations of 3,3',5'-triiodothyronamine, 3',5'-diiodothyronamine and 3,3'-diiodothyronamine as well as tyrosyl ring deiodinations of 3,5,3'-triiodothyronamine and 3,5-diiodothyronamine. Catalyzes the deiodination of L-thyroxine sulfate and 3,3',5-triiodo-L-thyronine sulfate via IRD and of 3,3',5'-triiodo-L-thyronine sulfate via ORD. This Gallus gallus (Chicken) protein is Type I iodothyronine deiodinase (DIO1).